Reading from the N-terminus, the 437-residue chain is uncharacterized protein (437 aa).

A phosphoserine mark is found at serine 290 and serine 293. Threonine 296 bears the Phosphothreonine mark. Residues serine 418 and serine 428 each carry the phosphoserine modification.

This is an uncharacterized protein from Schizosaccharomyces pombe (strain 972 / ATCC 24843) (Fission yeast).